A 409-amino-acid chain; its full sequence is Phosphatidylserine decarboxylase proenzyme, mitochondrial (409 aa).

The N-terminal 52 residues, Met1–Lys52, are a transit peptide targeting the mitochondrion. Topologically, residues Ile53–Leu63 are mitochondrial matrix. Residues Leu64–Gln82 form a helical membrane-spanning segment. Topologically, residues Tyr83 to Leu409 are mitochondrial intermembrane. Residues Asp191, His267, and Ser378 each act as charge relay system; for autoendoproteolytic cleavage activity in the active site. Ser378 (schiff-base intermediate with substrate; via pyruvic acid; for decarboxylase activity) is an active-site residue. Ser378 carries the pyruvic acid (Ser); by autocatalysis modification.

The protein belongs to the phosphatidylserine decarboxylase family. PSD-B subfamily. Eukaryotic type I sub-subfamily. As to quaternary structure, heterodimer of a large membrane-associated beta subunit and a small pyruvoyl-containing alpha subunit. The cofactor is pyruvate. In terms of processing, is synthesized initially as an inactive proenzyme. Formation of the active enzyme involves a self-maturation process in which the active site pyruvoyl group is generated from an internal serine residue via an autocatalytic post-translational modification. Two non-identical subunits are generated from the proenzyme in this reaction, and the pyruvate is formed at the N-terminus of the alpha chain, which is derived from the carboxyl end of the proenzyme. The autoendoproteolytic cleavage occurs by a canonical serine protease mechanism, in which the side chain hydroxyl group of the serine supplies its oxygen atom to form the C-terminus of the beta chain, while the remainder of the serine residue undergoes an oxidative deamination to produce ammonia and the pyruvoyl prosthetic group on the alpha chain. During this reaction, the Ser that is part of the protease active site of the proenzyme becomes the pyruvoyl prosthetic group, which constitutes an essential element of the active site of the mature decarboxylase.

It localises to the mitochondrion inner membrane. It is found in the lipid droplet. Its subcellular location is the cytoplasm. It carries out the reaction a 1,2-diacyl-sn-glycero-3-phospho-L-serine + H(+) = a 1,2-diacyl-sn-glycero-3-phosphoethanolamine + CO2. It functions in the pathway phospholipid metabolism; phosphatidylethanolamine biosynthesis. In terms of biological role, catalyzes the formation of phosphatidylethanolamine (PtdEtn) from phosphatidylserine (PtdSer). Plays a central role in phospholipid metabolism and in the interorganelle trafficking of phosphatidylserine. May be involved in lipid droplet biogenesis at the endoplasmic reticulum membrane. The chain is Phosphatidylserine decarboxylase proenzyme, mitochondrial from Pongo abelii (Sumatran orangutan).